Here is a 183-residue protein sequence, read N- to C-terminus: Negative modulator of initiation of replication (183 aa).

Positions 43–70 (VNDTQPVSAPAPSKAAPSAGNESRPQDR) are disordered. Residues 50 to 61 (SAPAPSKAAPSA) are compositionally biased toward low complexity. Interaction with DNA stretches follow at residues 89–90 (AV), 118–122 (RTRIY), and 152–158 (NTNTGRK).

It belongs to the SeqA family. As to quaternary structure, homodimer. Polymerizes to form helical filaments.

The protein resides in the cytoplasm. In terms of biological role, negative regulator of replication initiation, which contributes to regulation of DNA replication and ensures that replication initiation occurs exactly once per chromosome per cell cycle. Binds to pairs of hemimethylated GATC sequences in the oriC region, thus preventing assembly of replication proteins and re-initiation at newly replicated origins. Repression is relieved when the region becomes fully methylated. The protein is Negative modulator of initiation of replication of Pantoea ananatis (strain AJ13355).